The sequence spans 906 residues: MLSILKKLFGTANDRTVKKLFSEITKINSLEPAIQKLSDEELKNKTVEFKEKLKNGATLDDIVYEAFAVVREAAKRVCGMRHFDVQLIGGLILHRGMITEMRTGEGKTLVATLPAYLNALTGKGVHVVTVNDYLARRDSASMGKIYNFLGLSVGCIVGGMPDEVKRAAYNADITHATNNELGFDYLRDNMKYSLQERVLRPFNFAIIDEVDSILIDEARTPLVISGPVNDNAELYGKIDKIVRLLNASDFEKDEKLKTINLTETGITHIESLLSKENIIKPDTSLYDFENLTLVHYVNQALRAHNMFTVNVDYLVREGKVMIIDEFTGRVMEGRRYSEGLHQALEAKENVKIQNENQTLASITFQNYFRNYPKLSGMTGTAMTEAPELKDIYNLDVVAVPTHNKVTRLDLDDEIYGSKKEKYDAILKLIRDCYDRGQPMLVGTISIEKSEELSSVLNKEKIPHKVLNAKFHEQEAFIIAQAGRFKAVTIATNMAGRGTDIMLGGNPEMLIEQLDKEHNYEAKIAEIKAQIAEEKKQVIEAGGLFVIGTERHESRRIDNQLRGRSGRQGDPGKTKFFLSLDDDLMRIFASDRISGVLRTLGLKDGEAIHHPMISRSLEKAQQKVEGHNYEMRKNLLRFDDVMNDQRKIIYEQRTEIIKSKDSHGFLNSTTEELAKKIVLTFMPVGSYREDWDIENLSVELHRVFSIKFDHNVVSKNDVTEEEITKTVIQMAHYIYKSKEEAYSSELMHNAMKYILLTTLDQVWKDHLYSLDHLRQGISLRAYGQKDPLSEYKREAFNLFEQMLNNLKELFIQTVYHFHIDLKNVQKEDVSLEYKKLQKNMRESREDPAFSKYNAGSSLETDLKPVVSRIDPKDRNPDDPTSWGRVSRNELCPCGSGKKYKYCHGANE.

ATP contacts are provided by residues Gln86, 104–108 (GEGKT), and Asp499. The segment at 862-887 (KPVVSRIDPKDRNPDDPTSWGRVSRN) is disordered. Zn(2+) contacts are provided by Cys890, Cys892, Cys901, and His902.

It belongs to the SecA family. As to quaternary structure, monomer and homodimer. Part of the essential Sec protein translocation apparatus which comprises SecA, SecYEG and auxiliary proteins SecDF-YajC and YidC. The cofactor is Zn(2+).

The protein localises to the cell inner membrane. Its subcellular location is the cytoplasm. The catalysed reaction is ATP + H2O + cellular proteinSide 1 = ADP + phosphate + cellular proteinSide 2.. Its function is as follows. Part of the Sec protein translocase complex. Interacts with the SecYEG preprotein conducting channel. Has a central role in coupling the hydrolysis of ATP to the transfer of proteins into and across the cell membrane, serving both as a receptor for the preprotein-SecB complex and as an ATP-driven molecular motor driving the stepwise translocation of polypeptide chains across the membrane. This Rickettsia peacockii (strain Rustic) protein is Protein translocase subunit SecA.